The chain runs to 511 residues: Cytochrome P450 monooxygenase roqR (511 aa).

The first 23 residues, 1-23 (MSGYVLLTVQLAAVLLLVTLWRA), serve as a signal peptide directing secretion. N-linked (GlcNAc...) asparagine glycosylation is found at N364, N373, and N383. A heme-binding site is contributed by C455.

The protein belongs to the cytochrome P450 family. Heme is required as a cofactor.

It participates in alkaloid biosynthesis. In terms of biological role, cytochrome P450 monooxygenase; part of the gene cluster that mediates the biosynthesis of the mycotoxins roquefortine C and meleagrin. The first stage is catalyzed by the dipeptide synthase roqA which condenses histidine and tryptophan to produce histidyltryptophanyldiketopiperazine (HTD). HTD is then converted to roquefortine C through two possible pathways. In the first pathway, prenyltransferase roqD transforms HTD to the intermediate roquefortine D, which is in turn converted to roquefortine C by the cytochrome P450 monooxygenase roqR. In the second pathway, HTD is first converted to the intermediate dehydrohistidyltryptophanyldi-ketopiperazine (DHTD) by roqR which is then prenylated by roqD to form roquefortine C. Roquefortine C can be further transformed to meleagrin via three more reactions including oxydation to glandicolin A by roqM, which is further reduced to glandicoline B by roqO. Finally, glandicoline B is converted to meleagrin by the glandicoline B O-methyltransferase roqN. More studies identified further branching and additional metabolites produced by the roquefortine/meleagrin cluster, including roquefortine F, roquefortine L, roquefortine M, roquefortine N and neoxaline. This chain is Cytochrome P450 monooxygenase roqR, found in Penicillium rubens (strain ATCC 28089 / DSM 1075 / NRRL 1951 / Wisconsin 54-1255) (Penicillium chrysogenum).